The chain runs to 537 residues: MRRWPVDHRRRGRRRLSSWIWFLLGSFSVAGLVLFIVQHYHHQQDPSQLLLERDTRTEMVSPPHLNFTEEVTSASSFSRQLAEQMTLAKAYVFIAKEHNNLHLAWELSSKIRSCQLLLSKAAMRGQPISFDEAKPIITGLSALIYKAQDAHYDIATTMMTMKSHIQALEERANAATVQTTIFGQLVAEALPKSLHCLTIKLTSDWVTEPSRHELADENRNSPRLVDNNLYHFCIFSDNVIATSVVVNSTVSNADHPKQLVFHIVTNRVSYKAMQAWFLSNDFKGSAIEIRSVEEFSWLNASYSPVVKQLLDTDARAYYFGEQTSQDTISEPKVRNPKYLSLLNHLRFYIPEIYPQLEKIVFLDDDVVVQKDLTPLFSLDLHGNVNGAVETCLEAFHRYYKYLNFSNPLISSKFDPQACGWAFGMNVFDLIAWRNANVTARYHYWQDQNRERTLWKLGTLPPGLLSFYGLTEPLDRRWHVLGLGYDVNIDNRLIETAAVIHYNGNMKPWLKLAIGRYKPFWLKFLNSSHPYLQDCVTA.

At 1 to 16 (MRRWPVDHRRRGRRRL) the chain is on the cytoplasmic side. Residues 17 to 37 (SSWIWFLLGSFSVAGLVLFIV) form a helical; Signal-anchor for type II membrane protein membrane-spanning segment. At 38-537 (QHYHHQQDPS…HPYLQDCVTA (500 aa)) the chain is on the lumenal side. N-linked (GlcNAc...) asparagine glycosylation is found at asparagine 66, asparagine 247, asparagine 299, asparagine 403, asparagine 436, and asparagine 525.

Belongs to the glycosyltransferase 8 family. Monomer. In terms of tissue distribution, expressed in roots, inflorescences, siliques, seeds, leaves and stems.

It is found in the golgi apparatus membrane. It catalyses the reaction [(1-&gt;4)-alpha-D-galacturonosyl](n) + UDP-alpha-D-galacturonate = [(1-&gt;4)-alpha-D-galacturonosyl](n+1) + UDP + H(+). It participates in glycan metabolism; pectin biosynthesis. Functionally, glycosyltransferase involved in pectin and/or xylans biosynthesis in cell walls. Required for the biosynthesis of pectin in seed coat epidermal (SCE) cells. Collaboratively with MUCI70, essential for the accumulation of seed mucilage, a gelatinous wall rich in unbranched rhamnogalacturonan I (RG I), and for shaping the surface morphology of seeds. Catalyzes homogalacturonan (HG) elongation by acting as an HG alpha-1,4 galacturonic acid transferase. This chain is Hexosyltransferase GAUT11, found in Arabidopsis thaliana (Mouse-ear cress).